The following is a 181-amino-acid chain: NADH-quinone oxidoreductase subunit B (181 aa).

The [4Fe-4S] cluster site is built by C45, C46, C111, and C140.

It belongs to the complex I 20 kDa subunit family. In terms of assembly, NDH-1 is composed of 15 different subunits. Subunits NuoB, C, D, E, F, and G constitute the peripheral sector of the complex. Requires [4Fe-4S] cluster as cofactor.

Its subcellular location is the cell membrane. It carries out the reaction a quinone + NADH + 5 H(+)(in) = a quinol + NAD(+) + 4 H(+)(out). Functionally, NDH-1 shuttles electrons from NADH, via FMN and iron-sulfur (Fe-S) centers, to quinones in the respiratory chain. The immediate electron acceptor for the enzyme in this species is believed to be a menaquinone. Couples the redox reaction to proton translocation (for every two electrons transferred, four hydrogen ions are translocated across the cytoplasmic membrane), and thus conserves the redox energy in a proton gradient. This chain is NADH-quinone oxidoreductase subunit B, found in Deinococcus radiodurans (strain ATCC 13939 / DSM 20539 / JCM 16871 / CCUG 27074 / LMG 4051 / NBRC 15346 / NCIMB 9279 / VKM B-1422 / R1).